The sequence spans 387 residues: 3-ketoacyl-CoA thiolase (387 aa).

Cys-91 acts as the Acyl-thioester intermediate in catalysis. Active-site proton acceptor residues include His-343 and Cys-373.

Belongs to the thiolase-like superfamily. Thiolase family. As to quaternary structure, heterotetramer of two alpha chains (FadB) and two beta chains (FadA).

It localises to the cytoplasm. It carries out the reaction an acyl-CoA + acetyl-CoA = a 3-oxoacyl-CoA + CoA. It participates in lipid metabolism; fatty acid beta-oxidation. Catalyzes the final step of fatty acid oxidation in which acetyl-CoA is released and the CoA ester of a fatty acid two carbons shorter is formed. In Salmonella choleraesuis (strain SC-B67), this protein is 3-ketoacyl-CoA thiolase.